The primary structure comprises 295 residues: Protease HtpX homolog (295 aa).

2 helical membrane passes run 15-35 (LVMA…GYAF) and 39-59 (AQTG…VILG). Histidine 143 contributes to the Zn(2+) binding site. Glutamate 144 is a catalytic residue. Position 147 (histidine 147) interacts with Zn(2+). 2 consecutive transmembrane segments (helical) span residues 159–179 (ALAL…AMWW) and 195–215 (VIML…ASMA). Position 224 (glutamate 224) interacts with Zn(2+).

Belongs to the peptidase M48B family. Requires Zn(2+) as cofactor.

It localises to the cell membrane. In Ligilactobacillus salivarius (strain UCC118) (Lactobacillus salivarius), this protein is Protease HtpX homolog.